A 147-amino-acid chain; its full sequence is Large ribosomal subunit protein uL13 (147 aa).

This sequence belongs to the universal ribosomal protein uL13 family. In terms of assembly, part of the 50S ribosomal subunit.

Functionally, this protein is one of the early assembly proteins of the 50S ribosomal subunit, although it is not seen to bind rRNA by itself. It is important during the early stages of 50S assembly. The sequence is that of Large ribosomal subunit protein uL13 from Nocardioides sp. (strain ATCC BAA-499 / JS614).